The sequence spans 196 residues: Pro-FMRFamide-related neuropeptide VF (196 aa).

An N-terminal signal peptide occupies residues 1–26 (MEIISSKLFILLTLATSSLLTSNIFC). The propeptide occupies 27 to 55 (ADELVMSNLHSKENYDKYSEPRGYPKGER). Phenylalanine amide is present on F92. 2 propeptides span residues 95-99 (NVQEE) and 115-121 (NMEVSLV). Position 131 is a phenylalanine amide (F131). Residues 134-196 (TTTAKSVCRM…IDDAELKQEK (63 aa)) constitute a propeptide that is removed on maturation.

Belongs to the FARP (FMRFamide related peptide) family. In terms of tissue distribution, specifically expressed in the retina. Detected in the hypothalamus.

The protein localises to the secreted. Functionally, efficiently inhibits forskolin-induced production of cAMP. Acts as a potent negative regulator of gonadotropin synthesis and secretion. Induces secretion of prolactin. In terms of biological role, efficiently inhibits forskolin-induced production of cAMP. Blocks morphine-induced analgesia. Shows no inhibitory activity of forskolin-induced production of cAMP. This chain is Pro-FMRFamide-related neuropeptide VF, found in Homo sapiens (Human).